Consider the following 178-residue polypeptide: Large ribosomal subunit protein uL6 (178 aa).

The protein belongs to the universal ribosomal protein uL6 family. As to quaternary structure, part of the 50S ribosomal subunit.

In terms of biological role, this protein binds to the 23S rRNA, and is important in its secondary structure. It is located near the subunit interface in the base of the L7/L12 stalk, and near the tRNA binding site of the peptidyltransferase center. This Streptococcus thermophilus (strain CNRZ 1066) protein is Large ribosomal subunit protein uL6.